A 497-amino-acid chain; its full sequence is Serine/threonine-protein phosphatase 2A 56 kDa regulatory subunit beta isoform (497 aa).

Over residues 1–19 (METKLPPASTPTSPSSPGL) the composition is skewed to low complexity. Disordered stretches follow at residues 1–55 (METK…YQSN) and 473–497 (QGTQGAKEAPVPRPTPQVAASGGQS). S32, S35, S44, S46, S47, and S48 each carry phosphoserine. Over residues 34–45 (RSLRRARPRRSH) the composition is skewed to basic residues.

It belongs to the phosphatase 2A regulatory subunit B56 family. As to quaternary structure, component of the serine/threonine-protein phosphatase 2A complex (PP2A). This complex consists of a common heterodimeric core enzyme, composed of a 36 kDa catalytic subunit (subunit C) and a 65 kDa constant scaffold subunit (PR65 or subunit A), that associates with a variety of regulatory subunits. Proteins that associate with the core dimer include three families of regulatory subunits B (the R2/B/PR55/B55, R3/B''/PR72/PR130/PR59 and R5/B'/B56 families), the 48 kDa variable regulatory subunit, viral proteins, and cell signaling molecules. Interacts with SGO1. Interacts with AKT1. In terms of processing, ubiquitinated by CUL3-KLHL15 complex; this modification leads to proteasomal degradation.

The protein localises to the cytoplasm. Its function is as follows. As the regulatory component of the serine/threonine-protein phosphatase 2A (PP2A) holoenzyme, modulates substrate specificity, subcellular localization, and responsiveness to phosphorylation. The phosphorylated form mediates the interaction between PP2A and AKT1, leading to AKT1 dephosphorylation. This Mus musculus (Mouse) protein is Serine/threonine-protein phosphatase 2A 56 kDa regulatory subunit beta isoform (Ppp2r5b).